The chain runs to 77 residues: Vacuolar ATPase assembly integral membrane protein VMA21 (77 aa).

Residues 1-8 (MAVDVPTS) are Cytoplasmic-facing. Residues 9–29 (VIVKLMFFTLAMVSFPVLTFF) form a helical membrane-spanning segment. The Lumenal segment spans residues 30-41 (VSQQYTSNTLVN). Residues 42–62 (GGLAALAANVVLFAYVIMAFS) form a helical membrane-spanning segment. Residues 63-77 (EDVPQSDGKESKKQQ) lie on the Cytoplasmic side of the membrane. The short motif at 74 to 77 (KKQQ) is the Prevents secretion from ER element.

Belongs to the VMA21 family.

It localises to the endoplasmic reticulum membrane. Its subcellular location is the endoplasmic reticulum-Golgi intermediate compartment membrane. It is found in the cytoplasmic vesicle. The protein resides in the COPII-coated vesicle membrane. Required for the assembly of the V0 complex of the vacuolar ATPase (V-ATPase) in the endoplasmic reticulum. The protein is Vacuolar ATPase assembly integral membrane protein VMA21 of Eremothecium gossypii (strain ATCC 10895 / CBS 109.51 / FGSC 9923 / NRRL Y-1056) (Yeast).